The sequence spans 310 residues: Apolipoprotein E (310 aa).

The first 18 residues, 1–18, serve as a signal peptide directing secretion; it reads MKVLWAALVVTLLAGCGA. 8 repeat units span residues 77–98, 99–120, 121–142, 143–164, 165–186, 187–208, 209–226, and 227–248. Positions 77 to 248 are 8 X 22 AA approximate tandem repeats; sequence ALMDDTMKEV…RLDEVREQVQ (172 aa). The LDL and other lipoprotein receptors binding stretch occupies residues 155-165; the sequence is HLRKMRKRLLR. Residue 159-162 participates in heparin binding; that stretch reads MRKR. The interval 207 to 283 is lipid-binding and lipoprotein association; it reads HTLVSKPLQE…SWFEPLVQDM (77 aa). A heparin-binding site is contributed by 222–229; the sequence is AQRLRGRL. Positions 259–310 are homooligomerization; it reads NQVRLQAEAFQGRLKSWFEPLVQDMQQKWAELVEKVQLAVGAVPTSVPSEKQ. The specificity for association with VLDL stretch occupies residues 271–283; that stretch reads RLKSWFEPLVQDM.

This sequence belongs to the apolipoprotein A1/A4/E family. In terms of assembly, homotetramer. May interact with ABCA1; functionally associated with ABCA1 in the biogenesis of HDLs. May interact with APP/A4 amyloid-beta peptide; the interaction is extremely stable in vitro but its physiological significance is unclear. May interact with MAPT. May interact with MAP2. In the cerebrospinal fluid, interacts with secreted SORL1. Interacts with PMEL; this allows the loading of PMEL luminal fragment on ILVs to induce fibril nucleation. Post-translationally, APOE exists as multiple glycosylated and sialylated glycoforms within cells and in plasma. The extent of glycosylation and sialylation are tissue and context specific. In terms of processing, glycated in plasma VLDL. Phosphorylated by FAM20C in the extracellular medium.

Its subcellular location is the secreted. The protein localises to the extracellular space. It localises to the extracellular matrix. It is found in the extracellular vesicle. The protein resides in the endosome. Its subcellular location is the multivesicular body. Functionally, APOE is an apolipoprotein, a protein associating with lipid particles, that mainly functions in lipoprotein-mediated lipid transport between organs via the plasma and interstitial fluids. APOE is a core component of plasma lipoproteins and is involved in their production, conversion and clearance. Apolipoproteins are amphipathic molecules that interact both with lipids of the lipoprotein particle core and the aqueous environment of the plasma. As such, APOE associates with chylomicrons, chylomicron remnants, very low density lipoproteins (VLDL) and intermediate density lipoproteins (IDL) but shows a preferential binding to high-density lipoproteins (HDL). It also binds a wide range of cellular receptors including the LDL receptor/LDLR and the very low-density lipoprotein receptor/VLDLR that mediate the cellular uptake of the APOE-containing lipoprotein particles. Finally, APOE also has a heparin-binding activity and binds heparan-sulfate proteoglycans on the surface of cells, a property that supports the capture and the receptor-mediated uptake of APOE-containing lipoproteins by cells. This is Apolipoprotein E (APOE) from Ceratotherium simum cottoni (Northern white rhinoceros).